A 283-amino-acid chain; its full sequence is ATP synthase gamma chain (283 aa).

Belongs to the ATPase gamma chain family. As to quaternary structure, F-type ATPases have 2 components, CF(1) - the catalytic core - and CF(0) - the membrane proton channel. CF(1) has five subunits: alpha(3), beta(3), gamma(1), delta(1), epsilon(1). CF(0) has three main subunits: a, b and c.

Its subcellular location is the cell membrane. Functionally, produces ATP from ADP in the presence of a proton gradient across the membrane. The gamma chain is believed to be important in regulating ATPase activity and the flow of protons through the CF(0) complex. In Desulforamulus reducens (strain ATCC BAA-1160 / DSM 100696 / MI-1) (Desulfotomaculum reducens), this protein is ATP synthase gamma chain.